Consider the following 291-residue polypeptide: Protease HtpX homolog (291 aa).

A run of 2 helical transmembrane segments spans residues 4–24 (IALF…VASL) and 38–58 (LGAL…ISLL). Histidine 144 is a binding site for Zn(2+). Residue glutamate 145 is part of the active site. Residue histidine 148 participates in Zn(2+) binding. The next 2 helical transmembrane spans lie at 159-179 (LIQG…GYAV) and 199-219 (VTTI…VAWF). Position 224 (glutamate 224) interacts with Zn(2+).

The protein belongs to the peptidase M48B family. Zn(2+) serves as cofactor.

The protein localises to the cell inner membrane. The sequence is that of Protease HtpX homolog from Paracidovorax citrulli (strain AAC00-1) (Acidovorax citrulli).